A 326-amino-acid chain; its full sequence is Vitamin B12 import system permease protein BtuC (326 aa).

9 helical membrane-spanning segments follow: residues 19-39 (LSVLMLLALLLSLCAGELWIL), 61-81 (LAVLLVGAALAISGAVMQALF), 88-108 (PGLLGVSNGAGVGLIAAVLLG), 112-132 (LPNWALGLCAIAGALIITLIL), 146-166 (LLAGVALGIICSALMTWAIYF), 184-204 (GGVDWRQSWLMLALIPVLLWI), 240-260 (GWMVGVSVALAGAIGFIGLVI), 274-294 (VLLPGCALAGASALLLADIVA), and 302-322 (ELPIGVVTATLGAPVFIWLLL).

The protein belongs to the binding-protein-dependent transport system permease family. FecCD subfamily. The complex is composed of two ATP-binding proteins (BtuD), two transmembrane proteins (BtuC) and a solute-binding protein (BtuF).

Its subcellular location is the cell inner membrane. In terms of biological role, part of the ABC transporter complex BtuCDF involved in vitamin B12 import. Involved in the translocation of the substrate across the membrane. The sequence is that of Vitamin B12 import system permease protein BtuC from Escherichia coli O6:K15:H31 (strain 536 / UPEC).